Reading from the N-terminus, the 411-residue chain is Snake venom metalloproteinase VMP1 (411 aa).

The signal sequence occupies residues 1-20; it reads MIQVLLVTICLAAFPYQGSS. A propeptide spanning residues 21–189 is cleaved from the precursor; sequence IILESGNVND…KKAFQLNLTP (169 aa). The Peptidase M12B domain maps to 197 to 393; it reads RYVELVIIAD…KNPQCILNKP (197 aa). Ca(2+) contacts are provided by Glu200 and Asp284. 3 disulfide bridges follow: Cys308–Cys388, Cys348–Cys372, and Cys350–Cys355. An N-linked (GlcNAc...) asparagine glycan is attached at Asn311. His333 contacts Zn(2+). Residue Glu334 is part of the active site. The Zn(2+) site is built by His337 and His343. Positions 388, 391, 403, 406, 408, and 410 each coordinate Ca(2+).

This sequence belongs to the venom metalloproteinase (M12B) family. P-I subfamily. As to quaternary structure, monomer. The cofactor is Zn(2+). Expressed by the venom gland.

The protein resides in the secreted. Inhibited by EDTA and 1,10-phenanthroline, but not by PMSF. This venom zinc protease has fibrinolytic activity. The recombinant enzyme cleaves both alpha- (FGA) and beta-chains (FGB) of fibrinogen, but not the gamma-chain. The recombinant protein does not produce hemorrhage in mice and does not have effect on ADP- or collagen-stimulated platelet aggregation. This chain is Snake venom metalloproteinase VMP1, found in Agkistrodon piscivorus leucostoma (Western cottonmouth).